A 338-amino-acid chain; its full sequence is Large ribosomal subunit protein uL10 (338 aa).

Positions 298–338 are disordered; sequence TVQQSQSQQPAAEEKKEEKKEEEKKGPSEEEIASGLASLFG. The span at 309-325 shows a compositional bias: basic and acidic residues; sequence AEEKKEEKKEEEKKGPS.

Belongs to the universal ribosomal protein uL10 family. In terms of assembly, part of the 50S ribosomal subunit. Forms part of the ribosomal stalk which helps the ribosome interact with GTP-bound translation factors. Forms a heptameric L10(L12)2(L12)2(L12)2 complex, where L10 forms an elongated spine to which the L12 dimers bind in a sequential fashion.

Its function is as follows. Forms part of the ribosomal stalk, playing a central role in the interaction of the ribosome with GTP-bound translation factors. In Saccharolobus solfataricus (strain ATCC 35092 / DSM 1617 / JCM 11322 / P2) (Sulfolobus solfataricus), this protein is Large ribosomal subunit protein uL10.